The following is a 324-amino-acid chain: Glyoxylate/hydroxypyruvate reductase B (324 aa).

Active-site residues include arginine 237 and glutamate 266. The Proton donor role is filled by histidine 285.

This sequence belongs to the D-isomer specific 2-hydroxyacid dehydrogenase family. GhrB subfamily. As to quaternary structure, homodimer.

It is found in the cytoplasm. It carries out the reaction glycolate + NADP(+) = glyoxylate + NADPH + H(+). The catalysed reaction is (R)-glycerate + NAD(+) = 3-hydroxypyruvate + NADH + H(+). It catalyses the reaction (R)-glycerate + NADP(+) = 3-hydroxypyruvate + NADPH + H(+). Its function is as follows. Catalyzes the NADPH-dependent reduction of glyoxylate and hydroxypyruvate into glycolate and glycerate, respectively. In Escherichia coli O9:H4 (strain HS), this protein is Glyoxylate/hydroxypyruvate reductase B.